Here is a 299-residue protein sequence, read N- to C-terminus: Prohibitin-2 (299 aa).

A2 is modified (N-acetylalanine). The necessary for transcriptional repression stretch occupies residues 19–49 (MGTALKLLLGAGAVAYGIRESVFTVEGGHRA). Y128 bears the Phosphotyrosine mark. Residue K147 is modified to N6-acetyllysine. The tract at residues 150–174 (ASQLITQRAQVSLLIRRELTERAKD) is necessary for transcriptional repression. S151 carries the post-translational modification Phosphoserine. Residues 190–238 (SREYTAAVEAKQVAQQEAQRAQFLVEKAKQEQRQKIVQAEGEAEAARML) adopt a coiled-coil conformation. 3 positions are modified to N6-acetyllysine: K200, K250, and K262.

This sequence belongs to the prohibitin family. The mitochondrial prohibitin complex consists of two subunits (PHB1 and PHB2), assembled into a membrane-associated ring-shaped supercomplex of approximately 1 mDa. Interacts with ESR1, HDAC1 and HDAC5. Interacts with ZNF703. Interacts with STOML2. Interacts with ARFGEF3. Interacts with SPHK2. Interacts with COX4I1; the interaction associates PHB2 with COX. Interacts with MAP1LC3B (membrane-bound form LC3-II); the interaction is direct and upon mitochondrial depolarization and proteasome-dependent outer membrane rupture. Interacts with IGFBP6 (via C-terminal domain). Interacts with CLPB. Interacts with CD86 (via cytoplasmic domain); the interactions increases after priming with CD40. Interacts with AFG3L2. Interacts with DNAJC19. Interacts with AKT2; this interaction may be important for myogenic differentiation. In terms of processing, phosphorylated. Tyrosine phosphorylation is indirectly stimulated by IGFBP6.

It is found in the mitochondrion inner membrane. The protein resides in the cytoplasm. It localises to the nucleus. The protein localises to the cell membrane. Its function is as follows. Protein with pleiotropic attributes mediated in a cell-compartment- and tissue-specific manner, which include the plasma membrane-associated cell signaling functions, mitochondrial chaperone, and transcriptional co-regulator of transcription factors and sex steroid hormones in the nucleus. In terms of biological role, in the mitochondria, together with PHB, forms large ring complexes (prohibitin complexes) in the inner mitochondrial membrane (IMM) and functions as a chaperone protein that stabilizes mitochondrial respiratory enzymes and maintains mitochondrial integrity in the IMM, which is required for mitochondrial morphogenesis, neuronal survival, and normal lifespan. The prohibitin complex, with DNAJC19, regulates cardiolipin remodeling and the protein turnover of OMA1 in a cardiolipin-binding manner. Also regulates cytochrome-c oxidase assembly (COX) and mitochondrial respiration. Binding to sphingoid 1-phosphate (SPP) modulates its regulator activity. Has a key role of mitophagy receptor involved in targeting mitochondria for autophagic degradation. Involved in mitochondrial-mediated antiviral innate immunity, activates RIG-I-mediated signal transduction and production of IFNB1 and pro-inflammatory cytokine IL6. Functionally, in the nucleus, serves as transcriptional co-regulator. Acts as a mediator of transcriptional repression by nuclear hormone receptors via recruitment of histone deacetylases. Functions as an estrogen receptor (ER)-selective coregulator that potentiates the inhibitory activities of antiestrogens and represses the activity of estrogens. Competes with NCOA1 for modulation of ER transcriptional activity. In the plasma membrane, is involved in IGFBP6-induced cell migration. Cooperates with CD86 to mediate CD86-signaling in B lymphocytes that regulates the level of IgG1 produced through the activation of distal signaling intermediates. Upon CD40 engagement, required to activate NF-kappa-B signaling pathway via phospholipase C and protein kinase C activation. This is Prohibitin-2 (PHB2) from Bos taurus (Bovine).